The chain runs to 206 residues: Putative 3-methyladenine DNA glycosylase (206 aa).

Belongs to the DNA glycosylase MPG family.

This chain is Putative 3-methyladenine DNA glycosylase, found in Staphylococcus carnosus (strain TM300).